The primary structure comprises 96 residues: Co-chaperonin GroES (96 aa).

This sequence belongs to the GroES chaperonin family. Heptamer of 7 subunits arranged in a ring. Interacts with the chaperonin GroEL.

The protein resides in the cytoplasm. Functionally, together with the chaperonin GroEL, plays an essential role in assisting protein folding. The GroEL-GroES system forms a nano-cage that allows encapsulation of the non-native substrate proteins and provides a physical environment optimized to promote and accelerate protein folding. GroES binds to the apical surface of the GroEL ring, thereby capping the opening of the GroEL channel. The protein is Co-chaperonin GroES of Shewanella sediminis (strain HAW-EB3).